Here is a 302-residue protein sequence, read N- to C-terminus: Heme A synthase (302 aa).

Over Met-1–Lys-8 the chain is Cytoplasmic. The helical transmembrane segment at Trp-9–Thr-29 threads the bilayer. Residues Lys-30–Ser-67 lie on the Extracellular side of the membrane. An intrachain disulfide couples Cys-37 to Cys-44. Glu-60 is a catalytic residue. His-63 lines the heme o pocket. A helical membrane pass occupies residues Ala-68 to Ile-88. Residues Lys-89–Pro-93 lie on the Cytoplasmic side of the membrane. Residues Leu-94–Ile-114 form a helical membrane-spanning segment. The Extracellular segment spans residues Trp-115–His-125. His-125 lines the heme o pocket. A helical membrane pass occupies residues Phe-126–Ile-146. Residues Asp-147–Leu-161 lie on the Cytoplasmic side of the membrane. Residues Arg-162 to Val-182 traverse the membrane as a helical segment. Topologically, residues Arg-183 to Arg-215 are extracellular. His-214 provides a ligand contact to heme b. The chain crosses the membrane as a helical span at residues Gly-216 to Tyr-236. Residues Ser-237–Tyr-244 are Cytoplasmic-facing. The helical transmembrane segment at Gly-245–Ile-265 threads the bilayer. The Extracellular portion of the chain corresponds to Thr-266–Leu-270. The chain crosses the membrane as a helical span at residues Ile-271 to Ile-291. His-276 provides a ligand contact to heme b. The Cytoplasmic portion of the chain corresponds to Leu-292–Lys-302.

Belongs to the COX15/CtaA family. Type 1 subfamily. Interacts with CtaB. The cofactor is heme b.

Its subcellular location is the cell membrane. It catalyses the reaction Fe(II)-heme o + 2 A + H2O = Fe(II)-heme a + 2 AH2. Its pathway is porphyrin-containing compound metabolism; heme A biosynthesis; heme A from heme O: step 1/1. Its function is as follows. Catalyzes the conversion of heme O to heme A by two successive hydroxylations of the methyl group at C8. The first hydroxylation forms heme I, the second hydroxylation results in an unstable dihydroxymethyl group, which spontaneously dehydrates, resulting in the formyl group of heme A. This is Heme A synthase from Staphylococcus epidermidis (strain ATCC 12228 / FDA PCI 1200).